Reading from the N-terminus, the 328-residue chain is METDNGKGLILAVASSVFIGSSFILKKKGLKRAGAIGTRAGYGGYTYLLEPLWWAGMVTMIVGEAANFVAYIYAPAVLVTPLGALSIIISAVLAHFLLKEKLKKMGVLGCVSCIVGSVVIVIHAPKEQTPNSVEEIWNLATQPAFLIYVAITMSIVLALILHFEPLCGQTNILVYIGICSLMGALTVMSIKAIGIAIKLTMEGVSQIGYPQTWLFVMVAVTCVVTQLIYLNKALDTFNAAIVSPVYYVMFTTLTIVASAIMFKDWSGQDAASVASELCGFITVLTGTMILHGTREEEQQQASSEHVRWYDSRKSMNEEHLVSLYSPEY.

Residues 1-4 (METD) lie on the Extracellular side of the membrane. A helical transmembrane segment spans residues 5-25 (NGKGLILAVASSVFIGSSFIL). Topologically, residues 26-51 (KKKGLKRAGAIGTRAGYGGYTYLLEP) are cytoplasmic. Residues 52–72 (LWWAGMVTMIVGEAANFVAYI) traverse the membrane as a helical segment. Residues 73 to 76 (YAPA) lie on the Extracellular side of the membrane. The helical transmembrane segment at 77–97 (VLVTPLGALSIIISAVLAHFL) threads the bilayer. At 98–104 (LKEKLKK) the chain is on the cytoplasmic side. Residues 105–125 (MGVLGCVSCIVGSVVIVIHAP) form a helical membrane-spanning segment. Over 126–142 (KEQTPNSVEEIWNLATQ) the chain is Extracellular. The helical transmembrane segment at 143 to 163 (PAFLIYVAITMSIVLALILHF) threads the bilayer. The Cytoplasmic portion of the chain corresponds to 164–175 (EPLCGQTNILVY). The helical transmembrane segment at 176 to 196 (IGICSLMGALTVMSIKAIGIA) threads the bilayer. The Extracellular portion of the chain corresponds to 197–209 (IKLTMEGVSQIGY). A helical transmembrane segment spans residues 210 to 230 (PQTWLFVMVAVTCVVTQLIYL). The Cytoplasmic segment spans residues 231–240 (NKALDTFNAA). The chain crosses the membrane as a helical span at residues 241–261 (IVSPVYYVMFTTLTIVASAIM). The Extracellular portion of the chain corresponds to 262–269 (FKDWSGQD). A helical transmembrane segment spans residues 270 to 290 (AASVASELCGFITVLTGTMIL). Residues 291-328 (HGTREEEQQQASSEHVRWYDSRKSMNEEHLVSLYSPEY) are Cytoplasmic-facing.

Belongs to the NIPA (TC 2.A.7) family. In terms of assembly, homodimer.

Its subcellular location is the cell membrane. It is found in the early endosome. Acts as a Mg(2+) transporter. Can also transport other divalent cations such as Fe(2+), Sr(2+), Ba(2+), Mn(2+) and Co(2+) but to a much less extent than Mg(2+). The polypeptide is Probable magnesium transporter NIPA6 (Arabidopsis thaliana (Mouse-ear cress)).